A 216-amino-acid chain; its full sequence is Octanoyltransferase (216 aa).

The region spanning 35 to 213 is the BPL/LPL catalytic domain; sequence NSNPDFIWIG…IIQEEFNFDF (179 aa). Residues 77–84, 144–146, and 157–159 each bind substrate; these read RGGEVTCH, SIG, and GFS. The active-site Acyl-thioester intermediate is the Cys-175.

Belongs to the LipB family.

Its subcellular location is the cytoplasm. It catalyses the reaction octanoyl-[ACP] + L-lysyl-[protein] = N(6)-octanoyl-L-lysyl-[protein] + holo-[ACP] + H(+). The protein operates within protein modification; protein lipoylation via endogenous pathway; protein N(6)-(lipoyl)lysine from octanoyl-[acyl-carrier-protein]: step 1/2. Functionally, catalyzes the transfer of endogenously produced octanoic acid from octanoyl-acyl-carrier-protein onto the lipoyl domains of lipoate-dependent enzymes. Lipoyl-ACP can also act as a substrate although octanoyl-ACP is likely to be the physiological substrate. This chain is Octanoyltransferase, found in Prochlorococcus marinus (strain MIT 9312).